Reading from the N-terminus, the 156-residue chain is MPRRGAVPKREVLPDPVYQSKVLTKLINQVMLKGKKSLAESIVYGAMDIIKEKTGKNPLEVFETAMKNVMPVLEVKARRVGGANYQVPVEVRHDRRQTLAIRWLTNYARERAGKSMKEKLANEIMDAAAGTGGAVKKKEDTHKMAEANKAFAHYRW.

The protein belongs to the universal ribosomal protein uS7 family. As to quaternary structure, part of the 30S ribosomal subunit. Contacts proteins S9 and S11.

In terms of biological role, one of the primary rRNA binding proteins, it binds directly to 16S rRNA where it nucleates assembly of the head domain of the 30S subunit. Is located at the subunit interface close to the decoding center, probably blocks exit of the E-site tRNA. The polypeptide is Small ribosomal subunit protein uS7 (Pelotomaculum thermopropionicum (strain DSM 13744 / JCM 10971 / SI)).